The sequence spans 312 residues: Ornithine carbamoyltransferase, catabolic (312 aa).

Residues Ser-57–Thr-60, Gln-84, Arg-108, and His-135–Gln-138 contribute to the carbamoyl phosphate site. L-ornithine is bound by residues Asn-167, Asp-231, and Ser-235–Met-236. Cys-272–Leu-273 is a carbamoyl phosphate binding site.

Belongs to the aspartate/ornithine carbamoyltransferase superfamily. OTCase family.

The protein resides in the cytoplasm. It carries out the reaction carbamoyl phosphate + L-ornithine = L-citrulline + phosphate + H(+). Its pathway is amino-acid degradation; L-arginine degradation via ADI pathway; carbamoyl phosphate from L-arginine: step 2/2. Its function is as follows. Reversibly catalyzes the transfer of the carbamoyl group from carbamoyl phosphate (CP) to the N(epsilon) atom of ornithine (ORN) to produce L-citrulline. This chain is Ornithine carbamoyltransferase, catabolic (arcB), found in Mycoplasma capricolum subsp. capripneumoniae.